A 542-amino-acid chain; its full sequence is Nuclear hormone receptor family member nhr-35 (542 aa).

The segment at residues 74–149 (NSICHICSDV…SGMRDDQVQS (76 aa)) is a DNA-binding region (nuclear receptor). NR C4-type zinc fingers lie at residues 77 to 97 (CHIC…CNGC) and 113 to 137 (CRFE…FMKC). One can recognise an NR LBD domain in the interval 186–438 (EYDQLLESLL…VLMEELILAE (253 aa)). The disordered stretch occupies residues 445–487 (RQDQTPCSIMNDTPSGSQDMCSPCPEDLLRTSTSSNSPTNSSL). Residues 448–464 (QTPCSIMNDTPSGSQDM) are compositionally biased toward polar residues. Over residues 475–487 (TSTSSNSPTNSSL) the composition is skewed to low complexity.

This sequence belongs to the nuclear hormone receptor family.

The protein localises to the nucleus. Its function is as follows. Orphan nuclear receptor. This chain is Nuclear hormone receptor family member nhr-35 (nhr-35), found in Caenorhabditis elegans.